We begin with the raw amino-acid sequence, 115 residues long: uncharacterized protein (115 aa).

Residues glutamate 9 to isoleucine 30 are disordered.

This is an uncharacterized protein from Saccharomyces cerevisiae (strain ATCC 204508 / S288c) (Baker's yeast).